Reading from the N-terminus, the 120-residue chain is Vanadium-binding protein 2 (120 aa).

An N-terminal signal peptide occupies residues 1 to 20; sequence MSKVIFALVLVVVLVACINA. Positions 21–29 are excised as a propeptide; that stretch reads TYVEFEEAY. 9 disulfide bridges follow: Cys-34–Cys-88, Cys-38–Cys-84, Cys-42–Cys-81, Cys-48–Cys-74, Cys-52–Cys-69, Cys-56–Cys-65, Cys-92–Cys-119, Cys-97–Cys-114, and Cys-101–Cys-111.

In terms of assembly, interacts with VIP1. In terms of tissue distribution, expressed in vanadocytes.

It is found in the cytoplasm. Functionally, acts as a vanadium reductase which may form an electron transfer cascade in conjunction with NADPH and glutathione through thiol disulfide exchange reactions. Partial cleavage of its disulfide bonds results in the reduction of V(5+) to V(4+). Binds up to 24 V(4+) ions per protein at pH 7.5. Also binds Fe(3+) and Cu(2+) and, to a lesser extent, Co(2+), Zn(2+) and Ni(2+). This is Vanadium-binding protein 2 from Ascidia sydneiensis samea (Vanadium-rich ascidian).